Reading from the N-terminus, the 570-residue chain is Formate--tetrahydrofolate ligase (570 aa).

65-72 (TPLGEGKT) serves as a coordination point for ATP.

The protein belongs to the formate--tetrahydrofolate ligase family.

It carries out the reaction (6S)-5,6,7,8-tetrahydrofolate + formate + ATP = (6R)-10-formyltetrahydrofolate + ADP + phosphate. It functions in the pathway one-carbon metabolism; tetrahydrofolate interconversion. The polypeptide is Formate--tetrahydrofolate ligase (Herpetosiphon aurantiacus (strain ATCC 23779 / DSM 785 / 114-95)).